Reading from the N-terminus, the 313-residue chain is Homoserine O-succinyltransferase (313 aa).

Residue Cys142 is the Acyl-thioester intermediate of the active site. Substrate is bound by residues Lys163 and Ser192. His235 functions as the Proton acceptor in the catalytic mechanism. The active site involves Glu237. Residue Arg249 participates in substrate binding.

This sequence belongs to the MetA family.

The protein localises to the cytoplasm. It catalyses the reaction L-homoserine + succinyl-CoA = O-succinyl-L-homoserine + CoA. It participates in amino-acid biosynthesis; L-methionine biosynthesis via de novo pathway; O-succinyl-L-homoserine from L-homoserine: step 1/1. In terms of biological role, transfers a succinyl group from succinyl-CoA to L-homoserine, forming succinyl-L-homoserine. In Vibrio vulnificus (strain YJ016), this protein is Homoserine O-succinyltransferase.